A 328-amino-acid chain; its full sequence is Delta-aminolevulinic acid dehydratase (328 aa).

Residue K200 is the Schiff-base intermediate with substrate of the active site. Positions 210 and 222 each coordinate 5-aminolevulinate. Residue E238 coordinates Mg(2+). Catalysis depends on K253, which acts as the Schiff-base intermediate with substrate. Positions 279 and 318 each coordinate 5-aminolevulinate.

Belongs to the ALAD family. Homooctamer.

It carries out the reaction 2 5-aminolevulinate = porphobilinogen + 2 H2O + H(+). It participates in porphyrin-containing compound metabolism; protoporphyrin-IX biosynthesis; coproporphyrinogen-III from 5-aminolevulinate: step 1/4. Its activity is regulated as follows. Stimulated by magnesium, inhibited by zinc. In terms of biological role, catalyzes an early step in the biosynthesis of tetrapyrroles. Binds two molecules of 5-aminolevulinate per subunit, each at a distinct site, and catalyzes their condensation to form porphobilinogen. The polypeptide is Delta-aminolevulinic acid dehydratase (hemB) (Chlorobaculum parvum (strain DSM 263 / NCIMB 8327) (Chlorobium vibrioforme subsp. thiosulfatophilum)).